Here is a 495-residue protein sequence, read N- to C-terminus: Angiopoietin-2 (495 aa).

The N-terminal stretch at 1–18 is a signal peptide; that stretch reads MWQIVFFTLSCDLVRAAA. Residues Asn88, Asn118, Asn132, Asn150, Asn239, and Asn303 are each glycosylated (N-linked (GlcNAc...) asparagine). The stretch at 165–247 forms a coiled coil; sequence STNKLEKQIL…VNNSVLQKQQ (83 aa). The region spanning 274-494 is the Fibrinogen C-terminal domain; sequence KEEQIIYRDC…GTTMMIRPAD (221 aa). An intrachain disulfide couples Cys283 to Cys312. Ca(2+) is bound by residues Asp428, Asp430, Cys432, and Cys434. 2 disulfide bridges follow: Cys432-Cys434 and Cys436-Cys449.

In terms of assembly, interacts with TEK/TIE2, competing for the same binding site as ANGPT1. Interacts with ITGA5. Interacts with SVEP1/polydom. Interacts with THBD; this interaction significantly inhibits the generation of activated PC and TAFIa/CPB2 by the thrombin/thrombomodulin complex.

It localises to the secreted. In terms of biological role, binds to TEK/TIE2, competing for the ANGPT1 binding site, and modulating ANGPT1 signaling. Can induce tyrosine phosphorylation of TEK/TIE2 in the absence of ANGPT1. In the absence of angiogenic inducers, such as VEGF, ANGPT2-mediated loosening of cell-matrix contacts may induce endothelial cell apoptosis with consequent vascular regression. In concert with VEGF, it may facilitate endothelial cell migration and proliferation, thus serving as a permissive angiogenic signal. Involved in the regulation of lymphangiogenesis. The polypeptide is Angiopoietin-2 (ANGPT2) (Canis lupus familiaris (Dog)).